The following is a 262-amino-acid chain: 3-deoxy-manno-octulosonate cytidylyltransferase (262 aa).

The protein belongs to the KdsB family.

The protein resides in the cytoplasm. The catalysed reaction is 3-deoxy-alpha-D-manno-oct-2-ulosonate + CTP = CMP-3-deoxy-beta-D-manno-octulosonate + diphosphate. It functions in the pathway nucleotide-sugar biosynthesis; CMP-3-deoxy-D-manno-octulosonate biosynthesis; CMP-3-deoxy-D-manno-octulosonate from 3-deoxy-D-manno-octulosonate and CTP: step 1/1. The protein operates within bacterial outer membrane biogenesis; lipopolysaccharide biosynthesis. Activates KDO (a required 8-carbon sugar) for incorporation into bacterial lipopolysaccharide in Gram-negative bacteria. The chain is 3-deoxy-manno-octulosonate cytidylyltransferase from Acidovorax ebreus (strain TPSY) (Diaphorobacter sp. (strain TPSY)).